We begin with the raw amino-acid sequence, 651 residues long: Nucleolin (651 aa).

Low complexity predominate over residues 1 to 11 (MVKLAKGAKTQ). A disordered region spans residues 1 to 230 (MVKLAKGAKT…AKKTKTDTAS (230 aa)). A compositionally biased stretch (acidic residues) spans 26–45 (EDSEEEEDMEEDDSSDEEVE). A compositionally biased stretch (low complexity) spans 54–79 (KKTATPAKATPGKAATPGKKGATPAK). Positions 89–101 (SEEEEDDSDEEAE) are enriched in acidic residues. Basic residues predominate over residues 106-116 (IKNKPVAKKAV). 3 stretches are compositionally biased toward acidic residues: residues 122–134 (SEEDDDDEDESEE), 155–168 (SEEEDDEESEDEPM), and 183–204 (AEEDDEEEDDDDEEDDDDEEEQ). Ser155 is modified (phosphoserine). Positions 219–228 (PEAKKTKTDT) are enriched in basic and acidic residues. 4 consecutive RRM domains span residues 233-309 (LSIF…KAMA), 325-399 (RTLF…FTGE), 415-488 (KVLV…FSQG), and 503-578 (KTLF…FAKP). Residues 574 to 651 (DFAKPKGDSQ…GQGKKMRFDD (78 aa)) are disordered. The span at 585–644 (GGRGGFGRGGGFRGGRGGRGGGGGRGFGGRGGGRGRGGFGGRGGGGFRGGQGGGFRGGQG) shows a compositional bias: gly residues.

It is found in the nucleus. It localises to the nucleolus. In terms of biological role, nucleolin is the major nucleolar protein of growing eukaryotic cells. It is found associated with intranucleolar chromatin and pre-ribosomal particles. It induces chromatin decondensation by binding to histone H1. It is thought to play a role in pre-rRNA transcription and ribosome assembly. This is Nucleolin (ncl) from Xenopus laevis (African clawed frog).